The sequence spans 659 residues: 1,4-alpha-glucan branching enzyme GlgB 2 (659 aa).

The interval 1–26 (MRNYKELKHEKNGNVTEKIGENKGKS) is disordered. Catalysis depends on Asp337, which acts as the Nucleophile. Glu390 functions as the Proton donor in the catalytic mechanism.

Belongs to the glycosyl hydrolase 13 family. GlgB subfamily. In terms of assembly, monomer.

The catalysed reaction is Transfers a segment of a (1-&gt;4)-alpha-D-glucan chain to a primary hydroxy group in a similar glucan chain.. Its pathway is glycan biosynthesis; glycogen biosynthesis. Its function is as follows. Catalyzes the formation of the alpha-1,6-glucosidic linkages in glycogen by scission of a 1,4-alpha-linked oligosaccharide from growing alpha-1,4-glucan chains and the subsequent attachment of the oligosaccharide to the alpha-1,6 position. In Clostridium perfringens (strain SM101 / Type A), this protein is 1,4-alpha-glucan branching enzyme GlgB 2.